Reading from the N-terminus, the 110-residue chain is Phosphoribosyl-ATP pyrophosphatase (110 aa).

The protein belongs to the PRA-PH family.

The protein localises to the cytoplasm. The enzyme catalyses 1-(5-phospho-beta-D-ribosyl)-ATP + H2O = 1-(5-phospho-beta-D-ribosyl)-5'-AMP + diphosphate + H(+). It participates in amino-acid biosynthesis; L-histidine biosynthesis; L-histidine from 5-phospho-alpha-D-ribose 1-diphosphate: step 2/9. This chain is Phosphoribosyl-ATP pyrophosphatase, found in Clostridium botulinum (strain Kyoto / Type A2).